Here is a 387-residue protein sequence, read N- to C-terminus: Pepsin-3 (387 aa).

The N-terminal stretch at 1-15 (MKWLLLLGLLALSEC) is a signal peptide. A propeptide spans 16–59 (IIHKVPLVRKKSLRKNLIEKGLLKDYLKTHTPNLATKYLPKAAF) (activation peptide). Positions 75–384 (YFGTIGIGTP…DRANNQLGLA (310 aa)) constitute a Peptidase A1 domain. Residue aspartate 93 is part of the active site. Cystine bridges form between cysteine 106–cysteine 111 and cysteine 267–cysteine 271. Aspartate 276 is an active-site residue. An intrachain disulfide couples cysteine 310 to cysteine 343.

The protein belongs to the peptidase A1 family.

The protein localises to the secreted. It carries out the reaction Preferential cleavage: hydrophobic, preferably aromatic, residues in P1 and P1' positions. Cleaves 1-Phe-|-Val-2, 4-Gln-|-His-5, 13-Glu-|-Ala-14, 14-Ala-|-Leu-15, 15-Leu-|-Tyr-16, 16-Tyr-|-Leu-17, 23-Gly-|-Phe-24, 24-Phe-|-Phe-25 and 25-Phe-|-Tyr-26 bonds in the B chain of insulin.. In terms of biological role, shows particularly broad specificity; although bonds involving phenylalanine and leucine are preferred, many others are also cleaved to some extent. The protein is Pepsin-3 of Oryctolagus cuniculus (Rabbit).